A 222-amino-acid chain; its full sequence is Protein CicA (222 aa).

The chain is Protein CicA (cicA) from Caulobacter vibrioides (strain ATCC 19089 / CIP 103742 / CB 15) (Caulobacter crescentus).